We begin with the raw amino-acid sequence, 738 residues long: Photosystem I P700 chlorophyll a apoprotein A2 (738 aa).

8 consecutive transmembrane segments (helical) span residues 46–69 (LFST…FHIA), 135–158 (LYQG…LHLQ), 175–199 (LNHH…HVAI), 273–291 (IAHH…GHMY), 333–356 (LHFQ…QHMY), 372–398 (AALY…IFFI), 420–442 (AIIS…LYVH), and 521–539 (FLVH…LILV). [4Fe-4S] cluster contacts are provided by C563 and C572. Transmembrane regions (helical) follow at residues 579 to 600 (AFYL…YWHW) and 647 to 669 (LAVW…MFLI). Positions 658, 666, and 674 each coordinate chlorophyll a. Position 675 (W675) interacts with phylloquinone. The helical transmembrane segment at 711–731 (VVGLAHFTIGYILTYAAFLIA) threads the bilayer.

Belongs to the PsaA/PsaB family. The PsaA/B heterodimer binds the P700 chlorophyll special pair and subsequent electron acceptors. PSI consists of a core antenna complex that captures photons, and an electron transfer chain that converts photonic excitation into a charge separation. The cyanobacterial PSI reaction center is composed of one copy each of PsaA,B,C,D,E,F,I,J,K,L,M and X, and forms trimeric complexes. PSI electron transfer chain: 5 chlorophyll a, 1 chlorophyll a', 2 phylloquinones and 3 4Fe-4S clusters. PSI core antenna: 90 chlorophyll a, 22 carotenoids, 3 phospholipids and 1 galactolipid. P700 is a chlorophyll a/chlorophyll a' dimer, A0 is one or more chlorophyll a, A1 is one or both phylloquinones and FX is a shared 4Fe-4S iron-sulfur center. serves as cofactor.

The protein localises to the cellular thylakoid membrane. It carries out the reaction reduced [plastocyanin] + hnu + oxidized [2Fe-2S]-[ferredoxin] = oxidized [plastocyanin] + reduced [2Fe-2S]-[ferredoxin]. In terms of biological role, psaA and PsaB bind P700, the primary electron donor of photosystem I (PSI), as well as the electron acceptors A0, A1 and FX. PSI is a plastocyanin/cytochrome c6-ferredoxin oxidoreductase, converting photonic excitation into a charge separation, which transfers an electron from the donor P700 chlorophyll pair to the spectroscopically characterized acceptors A0, A1, FX, FA and FB in turn. Oxidized P700 is reduced on the lumenal side of the thylakoid membrane by plastocyanin or cytochrome c6. The chain is Photosystem I P700 chlorophyll a apoprotein A2 from Synechococcus sp. (strain WH7803).